The primary structure comprises 550 residues: Hydroxylamine reductase (550 aa).

The [4Fe-4S] cluster site is built by Cys7, Cys10, Cys19, and Cys25. 8 residues coordinate hybrid [4Fe-2O-2S] cluster: His244, Glu268, Cys312, Cys405, Cys433, Cys458, Glu493, and Lys495. Position 405 is a cysteine persulfide (Cys405).

Belongs to the HCP family. Requires [4Fe-4S] cluster as cofactor. It depends on hybrid [4Fe-2O-2S] cluster as a cofactor.

It is found in the cytoplasm. It catalyses the reaction A + NH4(+) + H2O = hydroxylamine + AH2 + H(+). In terms of biological role, catalyzes the reduction of hydroxylamine to form NH(3) and H(2)O. This Porphyromonas gingivalis (strain ATCC BAA-308 / W83) protein is Hydroxylamine reductase.